The following is a 97-amino-acid chain: Co-chaperonin GroES (97 aa).

It belongs to the GroES chaperonin family. Heptamer of 7 subunits arranged in a ring. Interacts with the chaperonin GroEL.

It is found in the cytoplasm. In terms of biological role, together with the chaperonin GroEL, plays an essential role in assisting protein folding. The GroEL-GroES system forms a nano-cage that allows encapsulation of the non-native substrate proteins and provides a physical environment optimized to promote and accelerate protein folding. GroES binds to the apical surface of the GroEL ring, thereby capping the opening of the GroEL channel. This is Co-chaperonin GroES from Wigglesworthia glossinidia brevipalpis.